Here is a 556-residue protein sequence, read N- to C-terminus: Formate--tetrahydrofolate ligase (556 aa).

Thr65–Ser72 serves as a coordination point for ATP.

This sequence belongs to the formate--tetrahydrofolate ligase family.

The catalysed reaction is (6S)-5,6,7,8-tetrahydrofolate + formate + ATP = (6R)-10-formyltetrahydrofolate + ADP + phosphate. It functions in the pathway one-carbon metabolism; tetrahydrofolate interconversion. In Clostridium perfringens (strain SM101 / Type A), this protein is Formate--tetrahydrofolate ligase.